Here is a 386-residue protein sequence, read N- to C-terminus: Succinate--CoA ligase [ADP-forming] subunit beta (386 aa).

One can recognise an ATP-grasp domain in the interval K9–E244. Residues K46, G53–G55, E99, C102, and E107 each bind ATP. N199 and D213 together coordinate Mg(2+). Substrate contacts are provided by residues N264 and G321–M323.

This sequence belongs to the succinate/malate CoA ligase beta subunit family. As to quaternary structure, heterotetramer of two alpha and two beta subunits. Mg(2+) is required as a cofactor.

The enzyme catalyses succinate + ATP + CoA = succinyl-CoA + ADP + phosphate. It catalyses the reaction GTP + succinate + CoA = succinyl-CoA + GDP + phosphate. The protein operates within carbohydrate metabolism; tricarboxylic acid cycle; succinate from succinyl-CoA (ligase route): step 1/1. In terms of biological role, succinyl-CoA synthetase functions in the citric acid cycle (TCA), coupling the hydrolysis of succinyl-CoA to the synthesis of either ATP or GTP and thus represents the only step of substrate-level phosphorylation in the TCA. The beta subunit provides nucleotide specificity of the enzyme and binds the substrate succinate, while the binding sites for coenzyme A and phosphate are found in the alpha subunit. The polypeptide is Succinate--CoA ligase [ADP-forming] subunit beta (Geobacillus kaustophilus (strain HTA426)).